A 188-amino-acid chain; its full sequence is Xanthine phosphoribosyltransferase (188 aa).

Residues Leu20 and Asn27 each coordinate xanthine. 127–131 (AHGEA) is a binding site for 5-phospho-alpha-D-ribose 1-diphosphate. Lys155 contacts xanthine.

It belongs to the purine/pyrimidine phosphoribosyltransferase family. Xpt subfamily. As to quaternary structure, homodimer.

Its subcellular location is the cytoplasm. It carries out the reaction XMP + diphosphate = xanthine + 5-phospho-alpha-D-ribose 1-diphosphate. Its pathway is purine metabolism; XMP biosynthesis via salvage pathway; XMP from xanthine: step 1/1. Functionally, converts the preformed base xanthine, a product of nucleic acid breakdown, to xanthosine 5'-monophosphate (XMP), so it can be reused for RNA or DNA synthesis. This is Xanthine phosphoribosyltransferase from Heliobacterium modesticaldum (strain ATCC 51547 / Ice1).